The sequence spans 813 residues: G-type lectin S-receptor-like serine/threonine-protein kinase LECRK1 (813 aa).

A signal peptide spans M1–A19. Topologically, residues Q20–S466 are extracellular. The region spanning Q22–D149 is the Bulb-type lectin domain. N24, N57, N164, N168, N219, and N242 each carry an N-linked (GlcNAc...) asparagine glycan. One can recognise an EGF-like; atypical domain in the interval P293–K346. 5 cysteine pairs are disulfide-bonded: C297–C315, C309–C327, C329–C345, C391–C413, and C395–C401. Residues C354–V433 form the PAN domain. N-linked (GlcNAc...) asparagine glycosylation is found at N407 and N441. The helical transmembrane segment at L467 to T487 threads the bilayer. At Y488–P813 the chain is on the cytoplasmic side. The region spanning A523 to V797 is the Protein kinase domain. Residues L529–V537 and K553 each bind ATP. D647 serves as the catalytic Proton acceptor.

The protein belongs to the protein kinase superfamily. Ser/Thr protein kinase family. Interacts (via kinase domain) with ADF4. In terms of tissue distribution, expressed in plumules, radicles and panicles.

It is found in the membrane. It catalyses the reaction L-seryl-[protein] + ATP = O-phospho-L-seryl-[protein] + ADP + H(+). The enzyme catalyses L-threonyl-[protein] + ATP = O-phospho-L-threonyl-[protein] + ADP + H(+). Its function is as follows. Involved in innate immunity. Required for the expression of defense-related genes PR1A, LOX2 and CHS1 upon biotic stresses. Required for basal resistance to the fungal blast (M.grisea), bacterial blight (O.oryzae pv. oryzae, Xoo) and the herbivorous insect brown planthopper (N.lugens, BPH). May be involved in several defense signaling pathways. Involved in the promotion of seed germination. Required for the expression of alpha-amylase genes during seed germination. Involved in resistance against the brown planthopper (BPH). Member of the BPH3 (BPH resistance locus 3) cluster which contains LECRK1, LECRK2 and LECRK3. The polypeptide is G-type lectin S-receptor-like serine/threonine-protein kinase LECRK1 (Oryza sativa subsp. indica (Rice)).